Here is a 169-residue protein sequence, read N- to C-terminus: Podoplanin (169 aa).

Positions 1-22 (MWRVPVLLLVLGGAGLRVPAAG) are cleaved as a signal peptide. Residues 23-138 (ASTVRPDDII…EKDGLATVTL (116 aa)) lie on the Extracellular side of the membrane. The O-linked (GalNAc...) threonine glycan is linked to threonine 25. The disordered stretch occupies residues 37-69 (DSVVTPGTEDSVVTPGAEDNVVTDGATEEPYES). O-linked (GalNAc...) serine glycosylation is present at serine 38. O-linked (GalNAc...) threonine glycans are attached at residues threonine 41 and threonine 44. Serine 47 is a glycosylation site (O-linked (GalNAc...) serine). O-linked (GalNAc...) threonine glycosylation is found at threonine 50, threonine 59, threonine 63, threonine 72, threonine 76, threonine 79, threonine 83, threonine 92, threonine 96, threonine 106, threonine 107, threonine 108, threonine 113, threonine 126, and threonine 127. A helical membrane pass occupies residues 139-159 (VGIIVGVLLAIGFIGGIIIVV). The tract at residues 140 to 144 (GIIVG) is requires for dimerization and lipid rafts association. At 160-169 (ARKMSGRYSP) the chain is on the cytoplasmic side. The interval 161-162 (RK) is requires for interaction with MSN and EZR.

It belongs to the podoplanin family. Homodimer. Interacts with CLEC1B; the interaction is independent of CLEC1B glycosylation and activates CLEC1B; the interaction is dependent of sialic acid on O-glycans. Interacts with CD9; this interaction is homophilic and attenuates platelet aggregation and pulmonary metastasis induced by PDPN. Interacts with LGALS8; the interaction is glycosylation-dependent; may participate in connection of the lymphatic endothelium to the surrounding extracellular matrix. Interacts with HSPA9. Interacts (via extracellular domain) with CD44; this interaction is required for PDPN-mediated directional migration and regulation of lamellipodia extension/stabilization during cell spreading and migration. Interacts (via cytoplasmic domain) with MSN and EZR; activates RHOA and promotes epithelial-mesenchymal transition. Interacts with CCL21; relocalized PDPN to the basolateral membrane. In terms of processing, extensively O-glycosylated. Contains sialic acid residues. O-glycosylation is necessary for platelet aggregation activity. Disialylated at Thr-59; sialic acid is critical for platelet-aggregating activity and for CLEC1B interaction. The N-terminus is blocked.

The protein resides in the membrane. The protein localises to the cell projection. It localises to the filopodium membrane. It is found in the lamellipodium membrane. Its subcellular location is the microvillus membrane. The protein resides in the ruffle membrane. The protein localises to the membrane raft. It localises to the apical cell membrane. It is found in the basolateral cell membrane. Its subcellular location is the invadopodium. Its function is as follows. Mediates effects on cell migration and adhesion through its different partners. During development plays a role in blood and lymphatic vessels separation by binding CLEC1B, triggering CLEC1B activation in platelets and leading to platelet activation and/or aggregation. Interaction with CD9, on the contrary, attenuates platelet aggregation and pulmonary metastasis induced by PDPN. Mediates effects on cell migration and adhesion through its different partners. Through MSN or EZR interaction promotes epithelial-mesenchymal transition (EMT) leading to ERZ phosphorylation and triggering RHOA activation leading to cell migration increase and invasiveness. Interaction with CD44 promotes directional cell migration in epithelial and tumor cells. In lymph nodes (LNs), controls fibroblastic reticular cells (FRCs) adhesion to the extracellular matrix (ECM) and contraction of the actomyosin by maintaining ERM proteins (EZR; MSN and RDX) and MYL9 activation through association with unknown transmembrane proteins. Engagement of CLEC1B by PDPN promotes FRCs relaxation by blocking lateral membrane interactions leading to reduction of ERM proteins (EZR; MSN and RDX) and MYL9 activation. Through binding with LGALS8 may participate in connection of the lymphatic endothelium to the surrounding extracellular matrix. In keratinocytes, induces changes in cell morphology showing an elongated shape, numerous membrane protrusions, major reorganization of the actin cytoskeleton, increased motility and decreased cell adhesion. Controls invadopodia stability and maturation leading to efficient degradation of the extracellular matrix (ECM) in tumor cells through modulation of RHOC activity in order to activate ROCK1/ROCK2 and LIMK1/LIMK2 and inactivation of CFL1. Required for normal lung cell proliferation and alveolus formation at birth. Does not function as a water channel or as a regulator of aquaporin-type water channels. Does not have any effect on folic acid or amino acid transport. The sequence is that of Podoplanin (PDPN) from Canis lupus familiaris (Dog).